Consider the following 335-residue polypeptide: DNA-directed RNA polymerase subunit alpha (335 aa).

The alpha N-terminal domain (alpha-NTD) stretch occupies residues methionine 1–glutamate 233. Residues valine 247–arginine 335 are alpha C-terminal domain (alpha-CTD).

This sequence belongs to the RNA polymerase alpha chain family. Homodimer. The RNAP catalytic core consists of 2 alpha, 1 beta, 1 beta' and 1 omega subunit. When a sigma factor is associated with the core the holoenzyme is formed, which can initiate transcription.

It catalyses the reaction RNA(n) + a ribonucleoside 5'-triphosphate = RNA(n+1) + diphosphate. DNA-dependent RNA polymerase catalyzes the transcription of DNA into RNA using the four ribonucleoside triphosphates as substrates. The protein is DNA-directed RNA polymerase subunit alpha of Psychrobacter sp. (strain PRwf-1).